The primary structure comprises 937 residues: Vacuolar membrane protease (937 aa).

The Cytoplasmic segment spans residues 1 to 16; the sequence is PNGFVKFIRSIFGYRK. The chain crosses the membrane as a helical span at residues 17–37; it reads TSLTLFVILTYVAVLLLAYLD. Topologically, residues 38 to 373 are vacuolar; sequence HSLYYSVDLP…FPTSQVVVAS (336 aa). N106 and N140 each carry an N-linked (GlcNAc...) asparagine glycan. Residues H154 and D166 each coordinate Zn(2+). E201 functions as the Proton acceptor in the catalytic mechanism. Zn(2+) is bound by residues E202, E227, and H300. A helical transmembrane segment spans residues 374–394; sequence ILLLVLIPGISIPFLIIIFGY. At 395–407 the chain is on the cytoplasmic side; it reads KKNWELSFVNVTK. A helical transmembrane segment spans residues 408-428; the sequence is FPISLAISAALLNLFTNGFIV. Topologically, residues 429–437 are vacuolar; that stretch reads PFNQFLPNS. Residues 438 to 458 traverse the membrane as a helical segment; sequence SPFALVAILFATFLLLNYLIL. The Cytoplasmic segment spans residues 459-475; it reads NGINLIFVSYKIVNHDE. The helical transmembrane segment at 476–496 threads the bilayer; it reads KLISIIETSFLYWVVLIYSTA. Over 497 to 510 the chain is Vacuolar; it reads KLANNVIGDDHSGE. A helical membrane pass occupies residues 511 to 531; sequence FPIIFLCALQAVASIFGLIGW. The Cytoplasmic segment spans residues 532-580; that stretch reads SFKPVPKEHYVVVPQEEAEPLLGSSDNFNYGSPDVEDDRLVSDGSYDWS. A helical membrane pass occupies residues 581 to 601; that stretch reads IQFLTIVPISTYLIYNSGFLV. Topologically, residues 602–618 are vacuolar; it reads VDGINKSIQESLISQNL. N-linked (GlcNAc...) asparagine glycosylation occurs at N606. The helical transmembrane segment at 619–639 threads the bilayer; the sequence is IYKLLQTFAISLSIPLLPFIF. Residues 640 to 643 are Cytoplasmic-facing; it reads KVNR. The helical transmembrane segment at 644–664 threads the bilayer; sequence LFVLALFLISTIGVLFVATAD. The Vacuolar portion of the chain corresponds to 665–937; the sequence is SFNVANPLKL…LVSVSKTVEL (273 aa). Residues N758, N870, and N887 are each glycosylated (N-linked (GlcNAc...) asparagine).

It belongs to the peptidase M28 family. It depends on Zn(2+) as a cofactor.

It is found in the vacuole membrane. Functionally, may be involved in vacuolar sorting and osmoregulation. The protein is Vacuolar membrane protease of Scheffersomyces stipitis (strain ATCC 58785 / CBS 6054 / NBRC 10063 / NRRL Y-11545) (Yeast).